We begin with the raw amino-acid sequence, 454 residues long: Inactive tetrahydroanabasine acetyltransferase pauper allele (454 aa).

The protein belongs to the plant acyltransferase family. Monomer.

This chain is Inactive tetrahydroanabasine acetyltransferase pauper allele, found in Lupinus albus (White lupine).